Reading from the N-terminus, the 386-residue chain is Alcohol dehydrogenase-like 2 (386 aa).

Residues Cys-51, Thr-53, His-74, Cys-104, Cys-107, Cys-110, Cys-118, and Cys-183 each coordinate Zn(2+). Thr-53 and His-74 together coordinate an alcohol. Thr-53 contacts NAD(+). NAD(+) is bound by residues 208–213, Asp-232, Lys-237, 302–304, Phe-329, and Arg-379; these read GLGAVG and LGM.

It belongs to the zinc-containing alcohol dehydrogenase family. Class-III subfamily. As to quaternary structure, homodimer. Zn(2+) is required as a cofactor.

The protein resides in the cytoplasm. The catalysed reaction is a primary alcohol + NAD(+) = an aldehyde + NADH + H(+). It carries out the reaction a secondary alcohol + NAD(+) = a ketone + NADH + H(+). The sequence is that of Alcohol dehydrogenase-like 2 from Arabidopsis thaliana (Mouse-ear cress).